We begin with the raw amino-acid sequence, 864 residues long: Dynamin-1 (864 aa).

One can recognise a Dynamin-type G domain in the interval Asp28–Pro294. A G1 motif region spans residues Gly38–Ser45. Ser41, Gly43, Lys44, Ser45, Ser46, Arg59, and Gly60 together coordinate GDP. A G2 motif region spans residues Val64–Arg66. Residue Tyr80 is modified to Phosphotyrosine. Tyr125 is subject to 3'-nitrotyrosine; alternate. Tyr125 is modified (phosphotyrosine; alternate). Residues Asp136 to Gly139 are G3 motif. A G4 motif region spans residues Thr205 to Asp208. GDP is bound by residues Lys206, Asp208, Asp211, Asn236, Arg237, and Gln239. The segment at Val235–Ser238 is G5 motif. Phosphoserine occurs at positions 306 and 347. Tyr354 is modified (phosphotyrosine). A Phosphoserine modification is found at Ser512. Positions Leu519–Val625 constitute a PH domain. Positions Val659–Val750 constitute a GED domain. The interval Ser767 to Leu864 is disordered. A Phosphoserine; by GSK3-beta modification is found at Ser774. Phosphoserine is present on Ser778. Arg796 bears the Omega-N-methylarginine mark. The residue at position 822 (Ser822) is a Phosphoserine. Pro residues predominate over residues Pro825–Val843. Ser851 and Ser857 each carry phosphoserine.

Belongs to the TRAFAC class dynamin-like GTPase superfamily. Dynamin/Fzo/YdjA family. As to quaternary structure, homodimer; homodimerization is mediated by the dynamin-type G domain which promotes assembly-stimulated GTPase activity. Homo-tetramer formed from two dimers in the absence of lipid. Oligomerizes into a helical polymer that self-assembles around the vesicle membrane, when associated to the menbrane through lipid binding. Interacts (via C-terminal proline-rich domain (PRD)) with SNX9 (via SH3 domain); this interaction allows regulation of DNM1 self-assembly during late stages of endocytic vesicle formation and supports DNM1's early functions in accelerating clathrin-coated pits (CCPs) maturation in non neuronals cell. Interacts (via C-terminal proline-rich domain (PRD)) with MYO1E (via SH3 domain); this interaction regulates receptor-mediated endocytosis. Interacts with SNX33 (via SH3 domain); this interaction decreases DNM1-dependent endocytosis. Interacts with DIAPH1. Interacts with GRB2 (via SH3 domain); this interaction mediates disassembly of DNM1 polymers, therefore modulates self-assembly. Forms a complex with BIN1 (via SH3 domain) and SH3GL2 (via SH3 domain). Forms a complex with SH3GL2 (via SH3 domain) and AMPH (via SH3 domain). Forms a complex with SH3GL2 (via SH3 domain) and SYNJ1. Interacts with AMPH. Interacts (via C-terminal proline-rich domain (PRD)) with SYT1; this interaction facilitates vesicle fission during clathrin-mediated endocytosis (CME). Interacts (via C-terminal proline-rich domain (PRD)) with PLCG1 (via SH3 domain); this interaction stimulates the release of GDP from DNM1 and enhances DNM1-dependent endocytosis. Interacts with SNPH; this interaction inhibits the binding of DNM1 to AMPH and DNM1-receptor-mediated endocytosis. Interacts with CAV1. Interacts with SH3GLB1 (via SH3 domain). Interacts with PACSIN1 (via SH3 domain), PACSIN2 (via SH3 domain) and PACSIN3 (via SH3 domain). Interacts with UNC119; this interaction decreases DNM1's GTPase activity and affects DNM1's interaction with AMPH. Interacts (GTP-bound form) with DNAJC6; this interaction allows clathrin-coated vesicle (CCV) formation at the plasma membrane. Post-translationally, phosphorylation at Ser-774 by GSK3B/GSK3-beta leads to inactivation of receptor-mediated endocytosis in non-neuronal cells. Dephosphorylation at Ser-774, through the EGFR downstream signaling, leads to activation and regulates early stages of clathrin-mediated endocytosis (CME). Phosphorylated by CDK5 leading to synaptic vesicle endocytosis (SVE) activation.

It is found in the cell membrane. Its subcellular location is the membrane. The protein localises to the clathrin-coated pit. It localises to the cytoplasmic vesicle. The protein resides in the presynapse. It is found in the secretory vesicle. Its subcellular location is the chromaffin granule. The catalysed reaction is GTP + H2O = GDP + phosphate + H(+). With respect to regulation, GTPase activity is activated by 1-phosphatidyl-1D-myo-inositol 4,5-bisphosphate. GTPase activity is inhibited by the heterodimer G protein formed by GNB1 and GNG2 with an IC(50)=400 nM when DNM1 concentration is 5 nM. Functionally, catalyzes the hydrolysis of GTP and utilizes this energy to mediate vesicle scission and participates in many forms of endocytosis, such as clathrin-mediated endocytosis or synaptic vesicle endocytosis as well as rapid endocytosis (RE). Associates to the membrane, through lipid binding, and self-assembles into rings and stacks of interconnected rings through oligomerization to form a helical polymer around the vesicle membrane leading to constriction of invaginated coated pits around their necks. Self-assembly of the helical polymer induces membrane tubules narrowing until the polymer reaches a length sufficient to trigger GTP hydrolysis. Depending on the curvature imposed on the tubules, membrane detachment from the helical polymer upon GTP hydrolysis can cause spontaneous hemifission followed by complete fission. May play a role in regulating early stages of clathrin-mediated endocytosis in non-neuronal cells through its activation by dephosphorylation via the signaling downstream of EGFR. Controls vesicle size at a step before fission, during formation of membrane pits, at hippocampal synapses. Controls plastic adaptation of the synaptic vesicle recycling machinery to high levels of activity. Mediates rapid endocytosis (RE), a Ca(2+)-dependent and clathrin- and K(+)-independent process in chromaffin cells. Microtubule-associated force-producing protein involved in producing microtubule bundles and able to bind and hydrolyze GTP. Through its interaction with DNAJC6, acts during the early steps of clathrin-coated vesicle (CCV) formation. In Homo sapiens (Human), this protein is Dynamin-1.